The chain runs to 87 residues: UPF0386 protein RSKD131_0371 (87 aa).

This sequence belongs to the UPF0386 family.

This chain is UPF0386 protein RSKD131_0371, found in Cereibacter sphaeroides (strain KD131 / KCTC 12085) (Rhodobacter sphaeroides).